We begin with the raw amino-acid sequence, 273 residues long: Undecaprenyl-diphosphatase (273 aa).

Helical transmembrane passes span 13-35 (GLVE…VFGN), 45-62 (VFEI…VFEY), 82-102 (FVLN…LFDK), 108-128 (LFNP…ILWV), 186-206 (TEFS…YDVL), 219-239 (LILI…KALL), and 250-270 (FAYY…SGWI).

This sequence belongs to the UppP family.

It is found in the cell inner membrane. It catalyses the reaction di-trans,octa-cis-undecaprenyl diphosphate + H2O = di-trans,octa-cis-undecaprenyl phosphate + phosphate + H(+). Catalyzes the dephosphorylation of undecaprenyl diphosphate (UPP). Confers resistance to bacitracin. The sequence is that of Undecaprenyl-diphosphatase from Neisseria gonorrhoeae (strain ATCC 700825 / FA 1090).